The following is a 182-amino-acid chain: Hexose transport activator protein (182 aa).

Positions 46-65 (GIWGPMEKKPGGVGKKKGSE) are disordered.

Its function is as follows. Multicopy expression suppresses glucose-uptake defects in various yeast mutants. The sequence is that of Hexose transport activator protein (AHT1) from Saccharomyces cerevisiae (strain ATCC 204508 / S288c) (Baker's yeast).